A 92-amino-acid polypeptide reads, in one-letter code: DNA-directed RNA polymerase subunit Rpo11 (92 aa).

The protein belongs to the archaeal Rpo11/eukaryotic RPB11/RPC19 RNA polymerase subunit family. As to quaternary structure, part of the RNA polymerase complex.

Its subcellular location is the cytoplasm. It carries out the reaction RNA(n) + a ribonucleoside 5'-triphosphate = RNA(n+1) + diphosphate. In terms of biological role, DNA-dependent RNA polymerase (RNAP) catalyzes the transcription of DNA into RNA using the four ribonucleoside triphosphates as substrates. The chain is DNA-directed RNA polymerase subunit Rpo11 from Saccharolobus islandicus (strain Y.N.15.51 / Yellowstone #2) (Sulfolobus islandicus).